A 725-amino-acid polypeptide reads, in one-letter code: IML2-like protein YKR018C (725 aa).

Thr196 carries the phosphothreonine modification. 3 positions are modified to phosphoserine: Ser246, Ser377, and Ser380.

Belongs to the IML2 family.

The protein resides in the cytoplasm. It localises to the nucleus. The polypeptide is IML2-like protein YKR018C (Saccharomyces cerevisiae (strain ATCC 204508 / S288c) (Baker's yeast)).